We begin with the raw amino-acid sequence, 90 residues long: Probable Fe(2+)-trafficking protein (90 aa).

The protein belongs to the Fe(2+)-trafficking protein family.

Functionally, could be a mediator in iron transactions between iron acquisition and iron-requiring processes, such as synthesis and/or repair of Fe-S clusters in biosynthetic enzymes. This is Probable Fe(2+)-trafficking protein from Pseudomonas aeruginosa (strain UCBPP-PA14).